Here is a 318-residue protein sequence, read N- to C-terminus: L-malyl-CoA/beta-methylmalyl-CoA lyase (318 aa).

Residues Phe19, Arg24, Lys30, and Arg76 each contribute to the substrate site. Residues Glu141 and Asp168 each coordinate Mg(2+). Substrate-binding positions include 167-168 and 251-252; these read AD and IH.

Belongs to the HpcH/HpaI aldolase family. In terms of assembly, homohexamer. Dimer of trimers. Mg(2+) is required as a cofactor. Requires Mn(2+) as cofactor.

It carries out the reaction (S)-malyl-CoA = glyoxylate + acetyl-CoA. The catalysed reaction is (2R,3S)-beta-methylmalyl-CoA = propanoyl-CoA + glyoxylate. In terms of biological role, involved in the ethylmalonyl-CoA pathway for acetate assimilation. Catalyzes the reversible condensation of glyoxylate and acetyl-CoA to L-malyl-CoA and the reversible condensation of glyoxylate and propionyl-CoA to yield beta-methylmalyl-CoA. The sequence is that of L-malyl-CoA/beta-methylmalyl-CoA lyase from Cereibacter sphaeroides (strain ATCC 17029 / ATH 2.4.9) (Rhodobacter sphaeroides).